We begin with the raw amino-acid sequence, 592 residues long: Transcription factor MYC3 (592 aa).

The tract at residues 82 to 141 (STGDNTVILGWGDGYYKGEEDKEKKKNNTNTAEQEHRKRVIRELNSLISGGIGVSDESND) is JAZ-interaction domain. Disordered regions lie at residues 261-313 (ENDP…VENQ), 341-361 (CGNE…NDEG), 393-422 (EPPE…AERQ), and 465-508 (QQAE…STAS). Positions 278–293 (SPARVNNGNNSNSNSK) are enriched in low complexity. Positions 294–306 (SDSHQISKLEKND) are enriched in basic and acidic residues. Positions 352 to 361 (VSKGSNNDEG) are enriched in polar residues. Over residues 398–407 (KPRKRGRKPA) the composition is skewed to basic residues. 2 stretches are compositionally biased toward basic and acidic residues: residues 408 to 422 (NGRE…AERQ) and 468 to 482 (ESDK…DGMS). A bHLH domain is found at 411–460 (EEPLNHVEAERQRREKLNQRFYSLRAVVPNVSKMDKASLLGDAISYINEL).

Homo- and heterodimer. Interacts with MYB28, MYB29, MYB34, MYB51, MYB76, MYB122, MYC2, MYC4, AFPH2/NINJA and the JAZ repressors TIFY10A/JAZ1, TIFY10B/JAZ2, TIFY6B/JAZ3, TIFY11A/JAZ5, TIFY11B/JAZ6, TIFY5B/JAZ7, TIFY5A/JAZ8, TIFY7/JAZ9, TIFY9/JAZ10, TIFY3A/JAZ11 and TIFY3B/JAZ12. Constitutively expressed in roots, stems, leaves, flowers, and seedlings.

The protein localises to the nucleus. Transcription factor involved in tryptophan, jasmonic acid (JA) and other stress-responsive gene regulation. With MYC2 and MYC4, controls additively subsets of JA-dependent responses. Can form complexes with all known glucosinolate-related MYBs to regulate glucosinolate biosynthesis. Binds to the G-box (5'-CACGTG-3') of promoters. Activates multiple TIFY/JAZ promoters. In Arabidopsis thaliana (Mouse-ear cress), this protein is Transcription factor MYC3 (MYC3).